Here is a 215-residue protein sequence, read N- to C-terminus: Nascent polypeptide-associated complex subunit alpha (215 aa).

The tract at residues 1–81 (MPGEATETVP…SEKKARKAMS (81 aa)) is disordered. Over residues 9–28 (VPATEQELPQPQAETGSGTE) the composition is skewed to polar residues. Residues 29–40 (SDSDESVPELEG) are compositionally biased toward acidic residues. At Ser-43 the chain carries Phosphoserine; by ILK1. A compositionally biased stretch (low complexity) spans 44–57 (TQATTQQAQLAAAA). Residues 69–80 (QSRSEKKARKAM) are required for DNA-binding. An NAC-A/B domain is found at 70–135 (SRSEKKARKA…AKIEDLSQQA (66 aa)). Residues 93–108 (RVTIRKSKNILFVITK) form an RNA/DNA-binding region. Ser-132 is modified (phosphoserine). Lys-142 is subject to N6-acetyllysine; alternate. A Glycyl lysine isopeptide (Lys-Gly) (interchain with G-Cter in SUMO2); alternate cross-link involves residue Lys-142. Residue Thr-159 is modified to Phosphothreonine; by GSK3-beta. Residue Thr-161 is modified to Phosphothreonine. Residues Ser-166, Ser-186, Ser-191, and Ser-203 each carry the phosphoserine modification. Residues 176 to 213 (VEVKDIEWVMSQANVSRAKAVRALKNNSNNIVNAIMEL) enclose the UBA domain.

Belongs to the NAC-alpha family. Part of the nascent polypeptide-associated complex (NAC), which is a heterodimer of NACA and BTF3 (via NAC-A/B domains). NAC associates with ribosomes through the BTF3/NACB subunit and contacts the ribosomal protein L23, which is positioned near the exiting site. Both subunits can contact nascent polypeptide chains. NACA may also form homodimers, and only this form binds DNA. Interacts with TBP and JUN. Phosphorylation of Ser-43 by ILK during cell adhesion may promote nuclear localization. Phosphorylation of Thr-159 by GSK3B may promote proteasome mediated degradation.

It is found in the cytoplasm. It localises to the nucleus. Functionally, prevents inappropriate targeting of non-secretory polypeptides to the endoplasmic reticulum (ER). Binds to nascent polypeptide chains as they emerge from the ribosome and blocks their interaction with the signal recognition particle (SRP), which normally targets nascent secretory peptides to the ER. Also reduces the inherent affinity of ribosomes for protein translocation sites in the ER membrane (M sites). May act as a specific coactivator for JUN, binding to DNA and stabilizing the interaction of JUN homodimers with target gene promoters. This chain is Nascent polypeptide-associated complex subunit alpha, found in Chinchilla lanigera (Long-tailed chinchilla).